A 1192-amino-acid chain; its full sequence is Probable inactive serine/threonine-protein kinase DDB_G0280131 (1192 aa).

Disordered stretches follow at residues 23 to 90 (STIN…NLNE), 144 to 189 (DSSI…SQQD), 201 to 236 (VSIS…TTTA), 301 to 406 (SIPT…FKDS), and 478 to 499 (DLDD…NNNK). Residues 26–43 (NLNNNNSNNNNNNNNNGN) show a composition bias toward low complexity. Polar residues predominate over residues 44–60 (SATKISFQEQMPNGNGN). 2 stretches are compositionally biased toward low complexity: residues 61-73 (SSTT…QQSA) and 154-175 (SSYL…SNNN). The span at 201-232 (VSISLPPPPTTEELPLPPPSTEELQLPPPPPT) shows a compositional bias: pro residues. A compositionally biased stretch (low complexity) spans 301 to 324 (SIPTPIVTPSTTTSTNTTTAATVN). A compositionally biased stretch (polar residues) spans 325–338 (KLNASKSPNGTLTT). The segment covering 362–376 (PTLSSPSPSQSAAPQ) has biased composition (low complexity). A compositionally biased stretch (pro residues) spans 377-391 (PAAPQPTPTSQPQPP). Composition is skewed to low complexity over residues 392 to 402 (TTTVSTPVSPT) and 485 to 498 (NKNN…NNNN). Residues 521 to 783 (AQPSDIIGSG…ILKILRQPLH (263 aa)) form the Protein kinase domain. ATP contacts are provided by residues 527-535 (IGSGNNGTT) and Lys-549. The interval 790–831 (KPTQQQQQQQQQDQQQQQPEQQLTSSTSSTSTQDSLVSQEQV) is disordered. Residues 791 to 828 (PTQQQQQQQQQDQQQQQPEQQLTSSTSSTSTQDSLVSQ) are compositionally biased toward low complexity.

The protein belongs to the protein kinase superfamily. TKL Ser/Thr protein kinase family.

In Dictyostelium discoideum (Social amoeba), this protein is Probable inactive serine/threonine-protein kinase DDB_G0280131.